Here is a 394-residue protein sequence, read N- to C-terminus: Aspergillopepsin-1 (394 aa).

The N-terminal stretch at 1 to 20 (MVVFSKTAALVLGLSTAVSA) is a signal peptide. The propeptide at 21 to 69 (APAPTRKGFTINQIARPANKTRTVNLPGLYARSLAKFGGTVPQSVKEAA) is activation peptide. The Peptidase A1 domain maps to 85–391 (YLTPVTVGKS…NSEGPKLGFA (307 aa)). Active-site residues include aspartate 101 and aspartate 283. The cysteines at positions 319 and 354 are disulfide-linked.

The protein belongs to the peptidase A1 family.

It is found in the secreted. The catalysed reaction is Hydrolysis of proteins with broad specificity. Generally favors hydrophobic residues in P1 and P1', but also accepts Lys in P1, which leads to activation of trypsinogen. Does not clot milk.. In terms of biological role, secreted aspartic endopeptidase that allows assimilation of proteinaceous substrates. The scissile peptide bond is attacked by a nucleophilic water molecule activated by two aspartic residues in the active site. Shows a broad primary substrate specificity. Favors hydrophobic residues at the P1 and P1' positions, but also accepts a lysine residue in the P1 position, leading to the activation of trypsinogen and chymotrypsinogen A. The polypeptide is Aspergillopepsin-1 (Aspergillus niger).